A 674-amino-acid polypeptide reads, in one-letter code: Kelch repeat and BTB domain-containing protein 6 (674 aa).

The interval 1 to 28 is disordered; it reads MQSREDAPRSRRLASPRGGKRPKKIHKP. The span at 10–27 shows a compositional bias: basic residues; that stretch reads SRRLASPRGGKRPKKIHK. Residues 63-138 enclose the BTB domain; sequence CDVTIEVVTP…CYTGRVSLSE (76 aa). Kelch repeat units lie at residues 386–435, 436–484, 486–523, 524–564, 567–616, and 642–673; these read AVCI…YLNG, YIYI…VIRD, LYAL…VFNE, EIYC…IIKH, KLLL…CLSA, and TEWD…RVAP. The interval 631–674 is disordered; it reads TEEEEIPSESSTEWDLGGFSEPDSESGSSSSLSDDDFWVRVAPQ. The ATG8 interaction motif (AIM) signature appears at 668–671; it reads WVRV.

In terms of assembly, core component of a BCR3 (BTB-CUL3-RBX1) E3 ubiquitin ligase complex, also named Cul3-RING ubiquitin ligase complex CUL3(KBTBD6/7), composed of CUL3, RBX1, KBTBD6 and KBTBD7. Interacts with GABARAP; the interaction is direct and is required for the ubiquitination of TIAM1. Interacts with GABARAPL1, GABARAPL2 and MAP1LC3B; the interaction is direct.

The protein resides in the cytoplasm. The protein localises to the nucleus. The protein operates within protein modification; protein ubiquitination. In terms of biological role, as part of the CUL3(KBTBD6/7) E3 ubiquitin ligase complex functions as a substrate adapter for the RAC1 guanine exchange factor (GEF) TIAM1, mediating its 'Lys-48' ubiquitination and proteasomal degradation. By controlling this ubiquitination, regulates RAC1 signal transduction and downstream biological processes including the organization of the cytoskeleton, cell migration and cell proliferation. Ubiquitination of TIAM1 requires the membrane-associated protein GABARAP which may restrict locally the activity of the complex. This Homo sapiens (Human) protein is Kelch repeat and BTB domain-containing protein 6.